The following is a 240-amino-acid chain: Regulatory protein RecX (240 aa).

The protein belongs to the RecX family.

The protein resides in the cytoplasm. Modulates RecA activity. The chain is Regulatory protein RecX from Lacticaseibacillus paracasei (strain ATCC 334 / BCRC 17002 / CCUG 31169 / CIP 107868 / KCTC 3260 / NRRL B-441) (Lactobacillus paracasei).